Reading from the N-terminus, the 253-residue chain is Tropomyosin-1 (253 aa).

The stretch at Val-7–Gln-253 forms a coiled coil.

The protein belongs to the tropomyosin family. In terms of assembly, homodimer.

In terms of biological role, tropomyosin, in association with the troponin complex, plays a central role in the calcium dependent regulation of muscle contraction. The polypeptide is Tropomyosin-1 (TROP1) (Hydra vulgaris (Hydra)).